A 294-amino-acid chain; its full sequence is Cytosolic Fe-S cluster assembly factor CFD1 (294 aa).

25 to 32 lines the ATP pocket; it reads GKGGVGKS. Residues cysteine 214 and cysteine 217 each coordinate [4Fe-4S] cluster.

This sequence belongs to the Mrp/NBP35 ATP-binding proteins family. NUBP2/CFD1 subfamily. In terms of assembly, heterotetramer of 2 NBP35 and 2 CFD1 chains. It depends on [4Fe-4S] cluster as a cofactor.

It is found in the cytoplasm. In terms of biological role, component of the cytosolic iron-sulfur (Fe/S) protein assembly (CIA) machinery. Required for maturation of extramitochondrial Fe-S proteins. The NBP35-CFD1 heterotetramer forms a Fe-S scaffold complex, mediating the de novo assembly of an Fe-S cluster and its transfer to target apoproteins. Required for biogenesis and export of both ribosomal subunits, which may reflect a role in assembly of the Fe/S clusters in RLI1, a protein which performs rRNA processing and ribosome export. This chain is Cytosolic Fe-S cluster assembly factor CFD1, found in Candida albicans (strain SC5314 / ATCC MYA-2876) (Yeast).